We begin with the raw amino-acid sequence, 498 residues long: Putrescine N-hydroxylase (498 aa).

Residues phenylalanine 23, aspartate 43, lysine 45, tryptophan 50, histidine 51, and glutamine 62 each contribute to the FAD site. NADP(+)-binding residues include glutamine 62 and arginine 104. Residue valine 127 participates in FAD binding. Positions 207, 231, 275, and 309 each coordinate NADP(+). The FAD site is built by asparagine 386, proline 397, and leucine 399. The span at 443 to 474 (LESNTHSAVTPSKTRQGLNPSAKSVQQPSIEP) shows a compositional bias: polar residues. A disordered region spans residues 443–498 (LESNTHSAVTPSKTRQGLNPSAKSVQQPSIEPQTALRIAPTGGNVSALMAPNKEAQ).

This sequence belongs to the lysine N(6)-hydroxylase/L-ornithine N(5)-oxygenase family. It depends on FAD as a cofactor.

It catalyses the reaction putrescine + NADPH + O2 = N-hydroxyputrescine + NADP(+) + H2O. The protein operates within siderophore biosynthesis. Its function is as follows. N-hydroxylating monooxygenase involved in the biosynthesis of the siderophore putrebactin. Catalyzes the N-hydroxylation of the aliphatic diamine putrescine into N-hydroxyputrescine (NHP). This is Putrescine N-hydroxylase from Shewanella oneidensis (strain ATCC 700550 / JCM 31522 / CIP 106686 / LMG 19005 / NCIMB 14063 / MR-1).